A 339-amino-acid chain; its full sequence is Probable E3 ubiquitin-protein ligase BAH1-like 1 (339 aa).

Positions 1 to 163 (MKFGAIYEEY…GSVSGRDFKS (163 aa)) constitute an SPX domain. Residues 235–284 (CPICLDTLFNPYALSCGHLFCKGCACGAASVYIFQGVKSAPPEAKCPVCR) form an RING-type zinc finger.

This sequence belongs to the RING-type zinc finger family.

It catalyses the reaction S-ubiquitinyl-[E2 ubiquitin-conjugating enzyme]-L-cysteine + [acceptor protein]-L-lysine = [E2 ubiquitin-conjugating enzyme]-L-cysteine + N(6)-ubiquitinyl-[acceptor protein]-L-lysine.. It participates in protein modification; protein ubiquitination. The polypeptide is Probable E3 ubiquitin-protein ligase BAH1-like 1 (Oryza sativa subsp. indica (Rice)).